We begin with the raw amino-acid sequence, 154 residues long: MSELCPCGSILNYHECCGPYILGTQVAAKPAILMRSRYCAYVEKNVDYLIATWHPDCHAQEWRESIIQGFTKTVWHGLTVIAETPGRHPDEAFVEFISRFTDADNAQITAMHERSRFLRIKEHWYYIDGIRPSLGRNDTCLCGSGKKHKKCCGR.

It belongs to the UPF0225 family.

The chain is UPF0225 protein YPTB2098 from Yersinia pseudotuberculosis serotype I (strain IP32953).